A 505-amino-acid polypeptide reads, in one-letter code: Protein disulfide-isomerase (505 aa).

Positions 1–20 are cleaved as a signal peptide; the sequence is MHKAQKFALGLLAAAAVATA. Thioredoxin domains lie at 21–128 and 335–465; these read SDVV…QSLP and FVAG…ENGK. Active-site nucleophile residues include Cys50, Cys53, Cys385, and Cys388. Intrachain disulfides connect Cys50/Cys53 and Cys385/Cys388. Residues 470–505 form a disordered region; it reads ISEDAEETSSATETTTETATKSEEAAKETATEHDEL. Residues 477–488 show a composition bias toward low complexity; that stretch reads TSSATETTTETA. Residues 489–505 are compositionally biased toward basic and acidic residues; that stretch reads TKSEEAAKETATEHDEL. The short motif at 502–505 is the Prevents secretion from ER element; that stretch reads HDEL.

The protein belongs to the protein disulfide isomerase family.

The protein localises to the endoplasmic reticulum lumen. The enzyme catalyses Catalyzes the rearrangement of -S-S- bonds in proteins.. In terms of biological role, participates in the folding of proteins containing disulfide bonds, may be involved in glycosylation, prolyl hydroxylation and triglyceride transfer. This Humicola insolens (Soft-rot fungus) protein is Protein disulfide-isomerase.